Here is a 579-residue protein sequence, read N- to C-terminus: Tricyclene synthase 0e23, chloroplastic (579 aa).

A chloroplast-targeting transit peptide spans 1–66 (MAFCISYLGA…ALCLNAHSTS (66 aa)). N-linked (GlcNAc...) asparagine glycans are attached at residues asparagine 27, asparagine 204, and asparagine 317. Mg(2+)-binding residues include aspartate 336 and aspartate 340. The DDXXD motif motif lies at 336–340 (DDIFD). 2 N-linked (GlcNAc...) asparagine glycosylation sites follow: asparagine 382 and asparagine 463. Mg(2+) contacts are provided by asparagine 480 and glutamate 488. An N-linked (GlcNAc...) asparagine glycan is attached at asparagine 507.

It belongs to the terpene synthase family. Tpsg subfamily. The cofactor is Mg(2+). It depends on Mn(2+) as a cofactor. Accumulates in flowers; mostly expressed in both upper and lower petal lobes, and, to a lower extent, in tube and stamens.

It is found in the plastid. The protein localises to the chloroplast stroma. It catalyses the reaction (2E)-geranyl diphosphate = tricyclene + diphosphate. The enzyme catalyses (2E)-geranyl diphosphate = (E)-beta-ocimene + diphosphate. Its pathway is secondary metabolite biosynthesis; terpenoid biosynthesis. Contributes to floral scent emission. The chain is Tricyclene synthase 0e23, chloroplastic (0e23) from Antirrhinum majus (Garden snapdragon).